Consider the following 424-residue polypeptide: GTPase Obg (424 aa).

One can recognise an Obg domain in the interval 1–158 (MFYDQAKIYV…RNLLLELKLL (158 aa)). Residues 159-329 (ADVGLVGFPN…LVYAAAKALP (171 aa)) enclose the OBG-type G domain. GTP-binding positions include 165-172 (GFPNVGKS), 190-194 (FTTLV), 212-215 (DIPG), 282-285 (NKMD), and 310-312 (SAA). Mg(2+) is bound by residues Ser172 and Thr192. One can recognise an OCT domain in the interval 347-424 (TQASAPHRFE…IAGIEFEWEE (78 aa)).

This sequence belongs to the TRAFAC class OBG-HflX-like GTPase superfamily. OBG GTPase family. In terms of assembly, monomer. Mg(2+) serves as cofactor.

The protein localises to the cytoplasm. Its function is as follows. An essential GTPase which binds GTP, GDP and possibly (p)ppGpp with moderate affinity, with high nucleotide exchange rates and a fairly low GTP hydrolysis rate. Plays a role in control of the cell cycle, stress response, ribosome biogenesis and in those bacteria that undergo differentiation, in morphogenesis control. The polypeptide is GTPase Obg (Desulfitobacterium hafniense (strain DSM 10664 / DCB-2)).